The chain runs to 159 residues: MVEYAHSKPVDPEEWTVIDAENAVLGRLASVVAKRILKGERIAVINTEKAIITGKKNTIKEEWLQKIQRGDPKKGPFYPRRPDLIFRRVVRGMLPWKTKRGREAFKRLRAYIGTPRWVEEANIEPERVAEADMSRLGHLWYVTLGELSEELGYQMPGGQ.

The protein belongs to the universal ribosomal protein uL13 family. Part of the 50S ribosomal subunit.

Functionally, this protein is one of the early assembly proteins of the 50S ribosomal subunit, although it is not seen to bind rRNA by itself. It is important during the early stages of 50S assembly. The protein is Large ribosomal subunit protein uL13 of Methanopyrus kandleri (strain AV19 / DSM 6324 / JCM 9639 / NBRC 100938).